Here is a 578-residue protein sequence, read N- to C-terminus: Paraneoplastic antigen Ma6F (578 aa).

Disordered regions lie at residues 106–221 and 441–578; these read AQPQ…AGAA and AAPV…PPGK. Residues 112-129 are compositionally biased toward low complexity; sequence AVARGAGEAGAAGEAGSV. Residues 147–159 are compositionally biased toward gly residues; sequence GGIGEAGGVGEAG. Low complexity predominate over residues 160–173; sequence AAGEAGAAGEAGAA. Over residues 174-211 the composition is skewed to gly residues; that stretch reads GEAGGAGEAGGAGEAGGAGEEGGTGEEGGAGEAGGAGE. The segment covering 449–461 has biased composition (low complexity); that stretch reads PAAAQASPAQGDA. Acidic residues-rich tracts occupy residues 462–473 and 556–566; these read SEADPGAEDADE and EESENEDEDGA.

This chain is Paraneoplastic antigen Ma6F, found in Homo sapiens (Human).